We begin with the raw amino-acid sequence, 435 residues long: Adenylosuccinate synthetase (435 aa).

GTP-binding positions include 19–25 (GDEGKGK) and 49–51 (GHT). Residue D20 is the Proton acceptor of the active site. Residues D20 and G49 each coordinate Mg(2+). Residues 20–23 (DEGK), 47–50 (NAGH), T139, R153, N233, T248, and R312 contribute to the IMP site. H50 functions as the Proton donor in the catalytic mechanism. Residue 308-314 (VTTGRKR) coordinates substrate. GTP contacts are provided by residues R314, 340–342 (KLD), and 422–424 (GVG).

It belongs to the adenylosuccinate synthetase family. Homodimer. The cofactor is Mg(2+).

The protein resides in the cytoplasm. It carries out the reaction IMP + L-aspartate + GTP = N(6)-(1,2-dicarboxyethyl)-AMP + GDP + phosphate + 2 H(+). The protein operates within purine metabolism; AMP biosynthesis via de novo pathway; AMP from IMP: step 1/2. In terms of biological role, plays an important role in the de novo pathway and in the salvage pathway of purine nucleotide biosynthesis. Catalyzes the first committed step in the biosynthesis of AMP from IMP. The chain is Adenylosuccinate synthetase from Brugia malayi (Filarial nematode worm).